The sequence spans 279 residues: Sulfur carrier protein FdhD (279 aa).

Cys-112 serves as the catalytic Cysteine persulfide intermediate.

Belongs to the FdhD family.

The protein localises to the cytoplasm. Required for formate dehydrogenase (FDH) activity. Acts as a sulfur carrier protein that transfers sulfur from IscS to the molybdenum cofactor prior to its insertion into FDH. This chain is Sulfur carrier protein FdhD, found in Nocardia farcinica (strain IFM 10152).